We begin with the raw amino-acid sequence, 105 residues long: Larval cuticle protein 65Ag1 (105 aa).

The N-terminal stretch at 1 to 18 (MKFLIVFVALFAVALAAP) is a signal peptide. A Chitin-binding type R&amp;R domain is found at 34 to 103 (PESFKYDWET…PQGAHLPVAP (70 aa)).

Functionally, component of the cuticle of the larva. The protein is Larval cuticle protein 65Ag1 of Drosophila melanogaster (Fruit fly).